We begin with the raw amino-acid sequence, 1035 residues long: Protein hir-1 (1035 aa).

WD repeat units follow at residues 15–54 (QKDF…NSHD), 68–107 (HHLG…PSHT), 129–168 (GHDN…KLKT), 171–210 (VHQS…PNAT), 232–275 (PLTT…SEIN), 299–338 (DENS…PVLI), and 342–383 (IASK…WVAK). Positions 393–479 (KYGGSRKGMG…PEEESADKTA (87 aa)) are disordered. The span at 408–425 (DGLHLENHSKEKELRGAE) shows a compositional bias: basic and acidic residues.

The protein belongs to the WD repeat HIR1 family.

The protein localises to the nucleus. Its function is as follows. Required for replication-independent chromatin assembly and for the periodic repression of histone gene transcription during the cell cycle. The protein is Protein hir-1 (hir-1) of Neurospora crassa (strain ATCC 24698 / 74-OR23-1A / CBS 708.71 / DSM 1257 / FGSC 987).